A 139-amino-acid polypeptide reads, in one-letter code: Large ribosomal subunit protein bL21 (139 aa).

The protein belongs to the bacterial ribosomal protein bL21 family. Part of the 50S ribosomal subunit. Contacts protein L20.

Functionally, this protein binds to 23S rRNA in the presence of protein L20. The protein is Large ribosomal subunit protein bL21 of Prochlorococcus marinus (strain NATL2A).